The following is a 764-amino-acid chain: Thyrotropin receptor (764 aa).

An N-terminal signal peptide occupies residues 1 to 21 (MRPGSLLLLVLLLALSRSLRG). Over 22-413 (KECASPPCEC…EFNPCEDIMG (392 aa)) the chain is Extracellular. Cys31 and Cys41 are oxidised to a cystine. 2 N-linked (GlcNAc...) asparagine glycosylation sites follow: Asn77 and Asn99. LRR repeat units lie at residues 100–124 (LSKMTHIEIRNTRSLTYIDPDALTE), 125–150 (LPLLKFLGIFNTGLRIFPDLTKIYST), 151–174 (DIFFILEITDNPYMTSVPENAFQG), 176–199 (CNETLTLKLYNNGFTSVQGHAFNG), 200–223 (TKLDAVYLNKNKYLTAIDNDAFGG), 225–248 (YSGPTLLDVSSTSVTALPSKGLEH), and 264–288 (PLSLSFLHLTRADLSYPSHCCAFKN). Asn177 and Asn198 each carry an N-linked (GlcNAc...) asparagine glycan. Asn302 carries N-linked (GlcNAc...) asparagine glycosylation. At Tyr385 the chain carries Sulfotyrosine. Residues 414–441 (YRFLRIVVWFVSLLALLGNIFVLLILLT) traverse the membrane as a helical segment. Topologically, residues 442–450 (SHYKLTVPR) are cytoplasmic. A helical membrane pass occupies residues 451 to 473 (FLMCNLAFADFCMGVYLLLIASV). The Extracellular segment spans residues 474 to 494 (DLYTHSEYYNHAIDWQTGPGC). The cysteines at positions 494 and 569 are disulfide-linked. A helical transmembrane segment spans residues 495–517 (NTAGFFTVFASELSVYTLTVITL). Residues 518–537 (ERWYAITFAMRLDRKIRLRH) are Cytoplasmic-facing. A helical transmembrane segment spans residues 538 to 560 (AYTIMAGGWVSCFLLALLPMVGI). The Extracellular segment spans residues 561 to 580 (SSYAKVSICLPMDTDTPLAL). A helical transmembrane segment spans residues 581-602 (AYIVLVLLLNVVAFVVVCSCYV). Over 603–625 (KIYITVRNPQYNPRDKDTKIAKR) the chain is Cytoplasmic. The helical transmembrane segment at 626 to 649 (MAVLIFTDFMCMAPISFYALSALM) threads the bilayer. Residues 650 to 660 (NKPLITVTNSK) lie on the Extracellular side of the membrane. The helical transmembrane segment at 661–682 (ILLVLFYPLNSCANPFLYAIFT) threads the bilayer. The Cytoplasmic portion of the chain corresponds to 683-764 (KAFQRDVFIL…ISEEYKQTAL (82 aa)). A PDZ-binding motif is present at residues 762-764 (TAL).

It belongs to the G-protein coupled receptor 1 family. FSH/LSH/TSH subfamily. As to quaternary structure, interacts with heterodimer GPHA2:GPHB5; this interaction stimulates cAMP production. Interacts (via the PDZ-binding motif) with SCRIB; regulates TSHR trafficking and function. Post-translationally, glycosylated. In terms of processing, sulfated. Sulfation on Tyr-385 plays a role in thyrotropin receptor binding and activation.

It localises to the cell membrane. It is found in the basolateral cell membrane. Functionally, receptor for the thyroid-stimulating hormone (TSH) or thyrotropin. Also acts as a receptor for the heterodimeric glycoprotein hormone (GPHA2:GPHB5) or thyrostimulin. The activity of this receptor is mediated by G proteins which activate adenylate cyclase. Plays a central role in controlling thyroid cell metabolism. The sequence is that of Thyrotropin receptor (Tshr) from Mus musculus (Mouse).